The chain runs to 960 residues: Mast/stem cell growth factor receptor Kit (960 aa).

The N-terminal stretch at 1 to 24 is a signal peptide; sequence MEGAHLAWELAHAVLLLSLIPAGG. The Extracellular portion of the chain corresponds to 25-511; sequence SVPHEESSLV…IRTHTLFTPL (487 aa). Ig-like C2-type domains lie at 27-102, 111-194, 201-294, 303-396, and 399-497; these read PHEE…VFVK, DSLI…LNVR, PVIT…LKAL, ATMN…VYVK, and PEIL…FNFA. 4 cysteine pairs are disulfide-bonded: cysteine 45-cysteine 87, cysteine 126-cysteine 175, cysteine 141-cysteine 172, and cysteine 222-cysteine 276. Asparagine 76, asparagine 135, asparagine 149, asparagine 269, asparagine 286, asparagine 306, asparagine 318, asparagine 338, asparagine 343, asparagine 356, asparagine 453, and asparagine 469 each carry an N-linked (GlcNAc...) asparagine glycan. Cysteine 414 and cysteine 481 are joined by a disulfide. A helical membrane pass occupies residues 512-532; the sequence is LIAFGVAAGLMCIIVMILVYI. Residues 533 to 960 lie on the Cytoplasmic side of the membrane; that stretch reads YLQKPKYEVQ…TQPLLVREDV (428 aa). Tyrosine 554 contributes to the Mg(2+) binding site. Phosphotyrosine; by autocatalysis occurs at positions 554 and 556. The Protein kinase domain occupies 575–913; the sequence is LSFGKTLGAG…QIVQLIEQQL (339 aa). Residues 582-589, lysine 609, and 657-663 contribute to the ATP site; these read GAGAFGKV and EYCCYGD. Tyrosine 689 and tyrosine 706 each carry phosphotyrosine; by autocatalysis. The active-site Proton acceptor is aspartate 777. Arginine 781 is a binding site for ATP. Mg(2+) contacts are provided by asparagine 782 and aspartate 795. 2 positions are modified to phosphotyrosine; by autocatalysis: tyrosine 808 and tyrosine 921.

This sequence belongs to the protein kinase superfamily. Tyr protein kinase family. CSF-1/PDGF receptor subfamily. Post-translationally, ubiquitinated. KIT is rapidly ubiquitinated after autophosphorylation induced by KITLG/SCF binding, leading to internalization and degradation. In terms of processing, autophosphorylated on tyrosine residues. KITLG/SCF binding promotes autophosphorylation. Phosphorylated tyrosine residues are important for interaction with specific binding partners. High in the brain and testes and also present in the bursa of Fabricus, heart, kidney, lung, spleen thymus and ovary.

The protein localises to the cell membrane. It carries out the reaction L-tyrosyl-[protein] + ATP = O-phospho-L-tyrosyl-[protein] + ADP + H(+). Tyrosine-protein kinase that acts as a cell-surface receptor for the cytokine KITLG/SCF and plays an essential role in the regulation of cell survival and proliferation, hematopoiesis, stem cell maintenance, gametogenesis, mast cell development, migration and function, and in melanogenesis. In response to KITLG/SCF binding, KIT can activate several signaling pathways. Promotes phosphorylation of PIK3R1, the regulatory subunit of phosphatidylinositol 3-kinase, and subsequent activation of the kinase AKT1. Activated KIT also transmits signals via GRB2 and activation of RAS, RAF1 and the MAP kinases MAPK1/ERK2 and/or MAPK3/ERK1. Promotes activation of STAT family members STAT1, STAT3, STAT5A and STAT5B. KIT promotes activation of PLCG1, leading to the production of the cellular signaling molecules diacylglycerol and inositol 1,4,5-trisphosphate. KIT signaling is modulated by protein phosphatases, and by rapid internalization and degradation of the receptor. The polypeptide is Mast/stem cell growth factor receptor Kit (KIT) (Gallus gallus (Chicken)).